The chain runs to 368 residues: Alcohol dehydrogenase 6 (368 aa).

Serine 23 is subject to Phosphoserine. The Zn(2+) site is built by cysteine 47, histidine 69, cysteine 99, cysteine 102, cysteine 105, cysteine 113, and cysteine 175. NAD(+)-binding positions include 200–205 (GLGGVG), aspartate 224, lysine 229, and 293–295 (VGV).

Belongs to the zinc-containing alcohol dehydrogenase family. Class-V subfamily. In terms of assembly, dimer. Zn(2+) serves as cofactor. Stomach and liver.

It is found in the cytoplasm. The enzyme catalyses a primary alcohol + NAD(+) = an aldehyde + NADH + H(+). It carries out the reaction a secondary alcohol + NAD(+) = a ketone + NADH + H(+). Inhibited partially by pyrazole (10 mM) in the reaction mixture containing 100 mM ethanol at pH 10.0. Alcohol dehydrogenase. Catalyzes the NAD-dependent oxidation of primary alcohols to the corresponding aldehydes. Oxidizes secondary alcohols to the corresponding ketones. The protein is Alcohol dehydrogenase 6 (ADH6) of Homo sapiens (Human).